The primary structure comprises 367 residues: uncharacterized protein (367 aa).

It to M.tuberculosis Rv0502.

This is an uncharacterized protein from Mycobacterium leprae (strain TN).